The following is a 365-amino-acid chain: 3-isopropylmalate dehydrogenase (365 aa).

78 to 91 (GPKWDTLPAEERPE) is a binding site for NAD(+). Arginine 99, arginine 109, arginine 138, and aspartate 227 together coordinate substrate. Mg(2+)-binding residues include aspartate 227, aspartate 251, and aspartate 255. Residue 285–297 (GSAPDIAGKNIAN) coordinates NAD(+).

The protein belongs to the isocitrate and isopropylmalate dehydrogenases family. LeuB type 1 subfamily. Homodimer. Requires Mg(2+) as cofactor. The cofactor is Mn(2+).

Its subcellular location is the cytoplasm. The catalysed reaction is (2R,3S)-3-isopropylmalate + NAD(+) = 4-methyl-2-oxopentanoate + CO2 + NADH. It functions in the pathway amino-acid biosynthesis; L-leucine biosynthesis; L-leucine from 3-methyl-2-oxobutanoate: step 3/4. Functionally, catalyzes the oxidation of 3-carboxy-2-hydroxy-4-methylpentanoate (3-isopropylmalate) to 3-carboxy-4-methyl-2-oxopentanoate. The product decarboxylates to 4-methyl-2 oxopentanoate. This Syntrophotalea carbinolica (strain DSM 2380 / NBRC 103641 / GraBd1) (Pelobacter carbinolicus) protein is 3-isopropylmalate dehydrogenase.